A 749-amino-acid polypeptide reads, in one-letter code: Phosphate-regulating neutral endopeptidase PHEX (749 aa).

Over 1–20 (MEAETGSSVETGKKANRGTR) the chain is Cytoplasmic. A helical; Signal-anchor for type II membrane protein transmembrane segment spans residues 21–41 (IALVVFVGGTLVLGTILFLVS). Over 42-641 (QGLLSLQAKQ…LNVKGKRTLG (600 aa)) the chain is Extracellular. The region spanning 53–749 (YCLKPECIEA…NRGMDSCRLW (697 aa)) is the Peptidase M13 domain. Cysteines 54 and 59 form a disulfide. Residues Asn71, Asn238, Asn263, Asn290, Asn301, Asn377, and Asn484 are each glycosylated (N-linked (GlcNAc...) asparagine). Intrachain disulfides connect Cys77/Cys733, Cys85/Cys693, Cys142/Cys406, and Cys617/Cys746. Residue His580 coordinates Zn(2+). The active site involves Glu581. Zn(2+) is bound by residues His584 and Glu642. Asp646 (proton donor) is an active-site residue. Asn736 is a glycosylation site (N-linked (GlcNAc...) asparagine).

The protein belongs to the peptidase M13 family. As to quaternary structure, interacts with MEPE; the interaction is zinc-dependent (via ASARM motif). The cofactor is Zn(2+). In terms of tissue distribution, specifically expressed in ovary. Expressed at low levels in kidney.

It localises to the cell membrane. Functionally, peptidase that cleaves SIBLING (small integrin-binding ligand, N-linked glycoprotein)-derived ASARM peptides, thus regulating their biological activity. Cleaves ASARM peptides between Ser and Glu or Asp residues. Regulates osteogenic cell differentiation and bone mineralization through the cleavage of the MEPE-derived ASARM peptide. Promotes dentin mineralization and renal phosphate reabsorption by cleaving DMP1- and MEPE-derived ASARM peptides. Inhibits the cleavage of MEPE by CTSB/cathepsin B thus preventing MEPE degradation. This Homo sapiens (Human) protein is Phosphate-regulating neutral endopeptidase PHEX (PHEX).